The following is a 555-amino-acid chain: E3 ubiquitin-protein ligase ARIH1 (555 aa).

Acidic residues predominate over residues 1 to 47 (MDSDEGYNYEFDEDEECSEEDSGAEEEEDDDEDEPDDDNLDLGEVEL). A disordered region spans residues 1–93 (MDSDEGYNYE…GGGGGPGHEQ (93 aa)). Gly residues predominate over residues 65 to 90 (ETGGGGGSALGPGGGGGGGGGGGGPG). The UBA-like stretch occupies residues 103 to 151 (TAEQILQHMVECIREVNEVIQNPATITRILLSHFNWDKEKLMERYFDGN). Position 140 is an N6-acetyllysine (lysine 140). Residues 180-391 (QDMPCQICYL…SAWYNCNRYN (212 aa)) are TRIAD supradomain. Zn(2+) contacts are provided by cysteine 184, cysteine 187, cysteine 201, histidine 203, cysteine 206, cysteine 209, cysteine 229, cysteine 234, cysteine 274, cysteine 279, cysteine 295, cysteine 297, cysteine 302, cysteine 305, histidine 310, cysteine 315, cysteine 342, and cysteine 345. The RING-type 1 zinc-finger motif lies at 184–234 (CQICYLNYPNSYFTGLECGHKFCMQCWSEYLTTKIMEEGMGQTISCPAHGC). The IBR-type zinc finger occupies 254–315 (LKYQHLITNS…GENWHDPVKC (62 aa)). The RING-type 2; atypical zinc-finger motif lies at 342–373 (CPKCHVTIEKDGGCNHMVCRNQNCKAEFCWVC). Cysteine 355 is an active-site residue. Zn(2+) is bound by residues cysteine 360, cysteine 365, cysteine 370, cysteine 373, histidine 380, and cysteine 387. Positions 406–555 (RAALQRYLFY…EKDLWEYIED (150 aa)) are ariadne domain.

It belongs to the RBR family. Ariadne subfamily. In terms of assembly, interacts (via the first RING-type zinc finger) with UBE2L3. Associates with cullin-RING ubiquitin ligase (CRL) complexes containing CUL1, CUL2 and CUL3. Interacts with neddylated CUL1. Interacts with neddylated CUL2. Interacts with neddylated CUL3. Interacts with neddylated CUL4A. Widely expressed.

It localises to the cytoplasm. It is found in the nucleus. Its subcellular location is the cajal body. It carries out the reaction [E2 ubiquitin-conjugating enzyme]-S-ubiquitinyl-L-cysteine + [acceptor protein]-L-lysine = [E2 ubiquitin-conjugating enzyme]-L-cysteine + [acceptor protein]-N(6)-ubiquitinyl-L-lysine.. Its pathway is protein modification; protein ubiquitination. Its activity is regulated as follows. Autoinhibited by the ariadne domain, which masks the second RING-type zinc finger that contains the active site and inhibits the E3 activity. Inhibition is relieved upon binding to neddylated cullin-RING ubiquitin ligase complexes, which activate the E3 ligase activity of ARIH1. Its function is as follows. E3 ubiquitin-protein ligase, which catalyzes ubiquitination of target proteins together with ubiquitin-conjugating enzyme E2 UBE2L3. Acts as an atypical E3 ubiquitin-protein ligase by working together with cullin-RING ubiquitin ligase (CRL) complexes and initiating ubiquitination of CRL substrates: associates with CRL complexes and specifically mediates addition of the first ubiquitin on CRLs targets. The initial ubiquitin is then elongated by CDC34/UBE2R1 and UBE2R2. E3 ubiquitin-protein ligase activity is activated upon binding to neddylated cullin-RING ubiquitin ligase complexes. Plays a role in protein translation in response to DNA damage by mediating ubiquitination of EIF4E2, the consequences of EIF4E2 ubiquitination are however unclear. According to a report, EIF4E2 ubiquitination leads to promote EIF4E2 cap-binding and protein translation arrest. According to another report EIF4E2 ubiquitination leads to its subsequent degradation. Acts as the ligase involved in ISGylation of EIF4E2. In vitro, controls the degradation of the LINC (LInker of Nucleoskeleton and Cytoskeleton) complex member SUN2 and may therefore have a role in the formation and localization of the LINC complex, and as a consequence, may act in nuclear subcellular localization and nuclear morphology. This is E3 ubiquitin-protein ligase ARIH1 (Arih1) from Mus musculus (Mouse).